The primary structure comprises 239 residues: Pyrroloquinoline-quinone synthase (239 aa).

This sequence belongs to the PqqC family.

It catalyses the reaction 6-(2-amino-2-carboxyethyl)-7,8-dioxo-1,2,3,4,7,8-hexahydroquinoline-2,4-dicarboxylate + 3 O2 = pyrroloquinoline quinone + 2 H2O2 + 2 H2O + H(+). The protein operates within cofactor biosynthesis; pyrroloquinoline quinone biosynthesis. Its function is as follows. Ring cyclization and eight-electron oxidation of 3a-(2-amino-2-carboxyethyl)-4,5-dioxo-4,5,6,7,8,9-hexahydroquinoline-7,9-dicarboxylic-acid to PQQ. In Gluconobacter oxydans (strain 621H) (Gluconobacter suboxydans), this protein is Pyrroloquinoline-quinone synthase.